A 508-amino-acid polypeptide reads, in one-letter code: Tryptamine 4-monooxygenase (508 aa).

An N-terminal signal peptide occupies residues Met1–Ser19. Cys439 is a heme binding site.

It belongs to the cytochrome P450 family. Requires heme as cofactor.

The catalysed reaction is tryptamine + AH2 + O2 = 4-hydroxytryptamine + A + H2O. It participates in secondary metabolite biosynthesis. Functionally, cytochrome P450 monooxygenase; part of the gene cluster that mediates the biosynthesis of psilocybin, a psychotropic tryptamine-derived natural product. The first step in the pathway is the decarboxylation of L-tryptophan to tryptamine by the decarboxylase psiD. 4-hydroxy-L-tryptophan is accepted as substrate by psiD as well. The cytochrome P450 monooxygenase psiH then converts tryptamine to 4-hydroxytryptamine. The kinase psiK catalyzes the 4-O-phosphorylation step by converting 4-hydroxytryptamine into norbaeocystin. The methyltransferase psiM then catalyzes iterative methyl transfer to the amino group of norbaeocystin to yield psilocybin via a monomethylated intermediate, baeocystin. The polypeptide is Tryptamine 4-monooxygenase (Psilocybe cubensis (Psychedelic mushroom)).